A 334-amino-acid polypeptide reads, in one-letter code: tRNA N6-adenosine threonylcarbamoyltransferase (334 aa).

His-107 and His-111 together coordinate Fe cation. Substrate contacts are provided by residues 129-133 (LVSGG), Asp-162, Gly-175, and Asn-269. Asp-297 contributes to the Fe cation binding site.

Belongs to the KAE1 / TsaD family. It depends on Fe(2+) as a cofactor.

Its subcellular location is the cytoplasm. The enzyme catalyses L-threonylcarbamoyladenylate + adenosine(37) in tRNA = N(6)-L-threonylcarbamoyladenosine(37) in tRNA + AMP + H(+). Functionally, required for the formation of a threonylcarbamoyl group on adenosine at position 37 (t(6)A37) in tRNAs that read codons beginning with adenine. Is involved in the transfer of the threonylcarbamoyl moiety of threonylcarbamoyl-AMP (TC-AMP) to the N6 group of A37, together with TsaE and TsaB. TsaD likely plays a direct catalytic role in this reaction. This chain is tRNA N6-adenosine threonylcarbamoyltransferase, found in Campylobacter concisus (strain 13826).